Consider the following 337-residue polypeptide: BRI1 kinase inhibitor 1 (337 aa).

A compositionally biased stretch (polar residues) spans 1–25 (METNLQQVKNSSQTFSEKQNPKQEA). 2 disordered regions span residues 1–38 (METNLQQVKNSSQTFSEKQNPKQEASPSPISSTCSSPS) and 51–72 (SSSSKHISPTLRSPSKTTSSYQ). Positions 26-38 (SPSPISSTCSSPS) are enriched in low complexity. A Phosphotyrosine modification is found at Tyr-211. Positions 270–310 (SAPASMRTSPTNSGHLRVSTAGLSSSSGSTSSSSSDSTMEE) are disordered. Residues 288-310 (STAGLSSSSGSTSSSSSDSTMEE) are compositionally biased toward low complexity.

Interacts (via C-terminus) with BRI1 (via kinase domain). In terms of processing, phosphorylated on Tyr-211 in response to brassinosteroid perception, leading to its inactivation: once phosphorylated, displaced into the cytosol where it is inactive. Expressed in leaves, petioles, shoot apices, hypocotyls, roots and flowers.

It localises to the cell membrane. It is found in the cytoplasm. Negative regulator of brassinosteroid signaling. When associated to the membrane, limits the interaction of BRI1 with BAK1 by binding to the kinase-inactive form of BRI1. The chain is BRI1 kinase inhibitor 1 (BKI1) from Arabidopsis thaliana (Mouse-ear cress).